A 457-amino-acid chain; its full sequence is MPHNSIRSGHGGLNQLGGAFVNGRPLPEVVRQRIVDLAHQGVRPCDISRQLRVSHGCVSKILGRYYETGSIRPGVIGGSKPKVATPKVVEKIGDYKRQNPTMFAWEIRDRLLAEGVCDNDTVPSVSSINRIIRTKVQQPFNLPMDSCVATKSLSPGHTLIPSSAVTPPESPQSDSLGSTYSINGLLGIAQPGNDNKRKMDDSDQDSCRLSIDSQSSSSGPRKHLRTDTFSQHHLEALECPFERQHYPEAYASPSHTKGEQGLYPLPLLNSALDDGKATLTSSNTPLGRNLSTHQTYPVVADPHSPFAIKQETPELSSSSSTPSSLSSSAFLDLQQVGSGGPAGASVPPFNAFPHAASVYGQFTGQALLSGREMVGPTLPGYPPHIPTSGQGSYASSAIAGMVAGSEYSGNAYSHTPYSSYSEAWRFPNSSLLSSPYYYSSTSRPSAPPTSATAFDHL.

The segment at residues 9-135 (GHGGLNQLGG…SSINRIIRTK (127 aa)) is a DNA-binding region (paired). The tract at residues 12–68 (GLNQLGGAFVNGRPLPEVVRQRIVDLAHQGVRPCDISRQLRVSHGCVSKILGRYYET) is PAI subdomain. Positions 87–135 (KVVEKIGDYKRQNPTMFAWEIRDRLLAEGVCDNDTVPSVSSINRIIRTK) are RED subdomain. A compositionally biased stretch (polar residues) spans 159–182 (LIPSSAVTPPESPQSDSLGSTYSI). Positions 159–224 (LIPSSAVTPP…SSSSGPRKHL (66 aa)) are disordered. A Phosphoserine modification is found at Ser304.

In terms of assembly, interacts with WWTR1. In terms of tissue distribution, expressed in the developing excretory system and the thyroid gland.

It is found in the nucleus. In terms of biological role, thought to encode a transcription factor. It may have a role in kidney cell differentiation. May play a regulatory role in mammalian development. In Mus musculus (Mouse), this protein is Paired box protein Pax-8 (Pax8).